A 345-amino-acid polypeptide reads, in one-letter code: UDP-3-O-acylglucosamine N-acyltransferase (345 aa).

H237 (proton acceptor) is an active-site residue.

It belongs to the transferase hexapeptide repeat family. LpxD subfamily. Homotrimer.

The catalysed reaction is a UDP-3-O-[(3R)-3-hydroxyacyl]-alpha-D-glucosamine + a (3R)-hydroxyacyl-[ACP] = a UDP-2-N,3-O-bis[(3R)-3-hydroxyacyl]-alpha-D-glucosamine + holo-[ACP] + H(+). It functions in the pathway bacterial outer membrane biogenesis; LPS lipid A biosynthesis. Functionally, catalyzes the N-acylation of UDP-3-O-acylglucosamine using 3-hydroxyacyl-ACP as the acyl donor. Is involved in the biosynthesis of lipid A, a phosphorylated glycolipid that anchors the lipopolysaccharide to the outer membrane of the cell. The chain is UDP-3-O-acylglucosamine N-acyltransferase from Geobacter sp. (strain M21).